A 332-amino-acid polypeptide reads, in one-letter code: Protoheme IX farnesyltransferase (332 aa).

The next 7 helical transmembrane spans lie at 63 to 83, 109 to 129, 132 to 152, 160 to 180, 188 to 208, 245 to 265, and 286 to 306; these read LICT…LNCL, TVFL…ISGV, LAAG…TIIL, IVFG…AATG, WLFS…AILL, ILGV…LLPF, and AKGL…LLLI.

The protein belongs to the UbiA prenyltransferase family. Protoheme IX farnesyltransferase subfamily.

It localises to the cell inner membrane. It catalyses the reaction heme b + (2E,6E)-farnesyl diphosphate + H2O = Fe(II)-heme o + diphosphate. Its pathway is porphyrin-containing compound metabolism; heme O biosynthesis; heme O from protoheme: step 1/1. Its function is as follows. Converts heme B (protoheme IX) to heme O by substitution of the vinyl group on carbon 2 of heme B porphyrin ring with a hydroxyethyl farnesyl side group. This Prochlorococcus marinus subsp. pastoris (strain CCMP1986 / NIES-2087 / MED4) protein is Protoheme IX farnesyltransferase.